A 371-amino-acid polypeptide reads, in one-letter code: Methionine import ATP-binding protein MetN (371 aa).

The interval 1 to 22 is disordered; sequence MSEPFMNAPWQPPGDHPALKSP. The ABC transporter domain maps to 27 to 268; sequence ILIDSVRKLY…PRHEVTRRFV (242 aa). 65–72 is an ATP binding site; sequence GRSGAGKS.

Belongs to the ABC transporter superfamily. Methionine importer (TC 3.A.1.24) family. As to quaternary structure, the complex is composed of two ATP-binding proteins (MetN), two transmembrane proteins (MetI) and a solute-binding protein (MetQ).

It localises to the cell inner membrane. The enzyme catalyses L-methionine(out) + ATP + H2O = L-methionine(in) + ADP + phosphate + H(+). The catalysed reaction is D-methionine(out) + ATP + H2O = D-methionine(in) + ADP + phosphate + H(+). In terms of biological role, part of the ABC transporter complex MetNIQ involved in methionine import. Responsible for energy coupling to the transport system. In Rhodopseudomonas palustris (strain BisB5), this protein is Methionine import ATP-binding protein MetN.